The chain runs to 359 residues: Peptide chain release factor 1 (359 aa).

At Q235 the chain carries N5-methylglutamine.

It belongs to the prokaryotic/mitochondrial release factor family. In terms of processing, methylated by PrmC. Methylation increases the termination efficiency of RF1.

Its subcellular location is the cytoplasm. Peptide chain release factor 1 directs the termination of translation in response to the peptide chain termination codons UAG and UAA. The chain is Peptide chain release factor 1 from Polynucleobacter asymbioticus (strain DSM 18221 / CIP 109841 / QLW-P1DMWA-1) (Polynucleobacter necessarius subsp. asymbioticus).